The sequence spans 1555 residues: Probable serine/threonine-protein kinase DDB_G0276181 (1555 aa).

5 disordered regions span residues 1–54 (MTSV…NNSF), 138–208 (IIQQ…NSKL), 342–452 (KLKK…DSPF), 486–508 (TTTT…IKPL), and 781–850 (NNIN…NQNT). 4 stretches are compositionally biased toward low complexity: residues 14–53 (NNSG…NNNS), 138–205 (IIQQ…NNNN), 359–378 (SNIA…KING), and 395–431 (NNSQ…SKKP). The PH domain occupies 58–238 (QVLHTGYLTK…WIEMIKLAIS (181 aa)). Positions 437 to 452 (RNISTSDNGSGTDSPF) are enriched in polar residues. 2 stretches are compositionally biased toward low complexity: residues 486–504 (TTTT…TNTN) and 781–832 (NNIN…NNNN). Over residues 833–850 (GSGLLSSSPLITISNQNT) the composition is skewed to polar residues. One can recognise a Protein kinase domain in the interval 986–1309 (VVLHERLGTG…TIIHSISKMI (324 aa)). 992 to 1000 (LGTGATGDI) lines the ATP pocket. Residues 1012–1031 (RHISNQDSSGSNSSGSGSGH) are disordered. Lysine 1061 contacts ATP. The active-site Proton acceptor is the aspartate 1156. The span at 1340-1376 (VQNNNNNSNNNNNNNNNNNNNNSNSNLNNCNNSSPNL) shows a compositional bias: low complexity. Disordered regions lie at residues 1340 to 1383 (VQNN…SANN) and 1457 to 1480 (KKSS…GSSR).

It belongs to the protein kinase superfamily. TKL Ser/Thr protein kinase family.

It catalyses the reaction L-seryl-[protein] + ATP = O-phospho-L-seryl-[protein] + ADP + H(+). It carries out the reaction L-threonyl-[protein] + ATP = O-phospho-L-threonyl-[protein] + ADP + H(+). The chain is Probable serine/threonine-protein kinase DDB_G0276181 from Dictyostelium discoideum (Social amoeba).